We begin with the raw amino-acid sequence, 132 residues long: Small ribosomal subunit protein uS8 (132 aa).

It belongs to the universal ribosomal protein uS8 family. In terms of assembly, part of the 30S ribosomal subunit. Contacts proteins S5 and S12.

Functionally, one of the primary rRNA binding proteins, it binds directly to 16S rRNA central domain where it helps coordinate assembly of the platform of the 30S subunit. In Bacillus velezensis (strain DSM 23117 / BGSC 10A6 / LMG 26770 / FZB42) (Bacillus amyloliquefaciens subsp. plantarum), this protein is Small ribosomal subunit protein uS8.